A 422-amino-acid polypeptide reads, in one-letter code: 5-hydroxytryptamine receptor 1A (422 aa).

The interval 1 to 23 is disordered; that stretch reads MDVLSPGQGNNTTSPPAPFETGG. The Extracellular segment spans residues 1–38; the sequence is MDVLSPGQGNNTTSPPAPFETGGNTTGISDVTVSYQVI. 3 N-linked (GlcNAc...) asparagine glycosylation sites follow: N10, N11, and N24. A helical transmembrane segment spans residues 39-59; that stretch reads TSLLLGTLIFCAVLGNACVVA. Residues 60–73 are Cytoplasmic-facing; it reads AIALERSLQNVANY. The helical transmembrane segment at 74–98 threads the bilayer; it reads LIGSLAVTDLMVSVLVLPMAALYQV. Over 99-107 the chain is Extracellular; that stretch reads LNKWTLGQV. A helical transmembrane segment spans residues 108–132; sequence TCDLFIALDVLCCTSSILHLCAIAL. C109 and C187 are joined by a disulfide. 2 residues coordinate serotonin: D116 and C120. Positions 133–135 match the DRY motif; important for ligand-induced conformation changes motif; it reads DRY. Topologically, residues 133 to 152 are cytoplasmic; it reads DRYWAITDPIDYVNKRTPRR. Residues 153 to 174 form a helical membrane-spanning segment; sequence AAALISLTWLIGFLISIPPMLG. Residues 175–193 lie on the Extracellular side of the membrane; that stretch reads WRTPEDRSDPDACTISKDH. A helical membrane pass occupies residues 194 to 216; the sequence is GYTIYSTFGAFYIPLLLMLVLYG. Over 217–346 the chain is Cytoplasmic; it reads RIFRAARFRI…LARERKTVKT (130 aa). Positions 235-262 are disordered; the sequence is KTGADTRHGASPAPQPKKSVNGESGSRN. T314, K345, T346, and G352 together coordinate 1D-myo-inositol 4-phosphate. Residues 347–370 form a helical membrane-spanning segment; sequence LGIIMGTFILCWLPFFIVALVLPF. Residues 371–378 are Extracellular-facing; it reads CESSCHMP. Residues 379–403 form a helical membrane-spanning segment; the sequence is TLLGAIINWLGYSNSLLNPVIYAYF. The NPxxY motif; important for ligand-induced conformation changes and signaling signature appears at 396 to 400; it reads NPVIY. The 1D-myo-inositol 4-phosphate site is built by F403, N404, and K405. The Cytoplasmic segment spans residues 404–422; the sequence is NKDFQNAFKKIIKCKFCRQ.

It belongs to the G-protein coupled receptor 1 family. 5-hydroxytryptamine receptor subfamily. HTR1A sub-subfamily. As to quaternary structure, heterodimer; heterodimerizes with GPER1. Interacts with YIF1B. Interacts with GPR39 and GALR1. Detected in lymph nodes, thymus and spleen. Detected in activated T-cells, but not in resting T-cells.

Its subcellular location is the cell membrane. The protein resides in the cell projection. It is found in the dendrite. Its activity is regulated as follows. G-protein coupled receptor activity is regulated by lipids: phosphatidylinositol 4-phosphate increases HTR1A-mediated activity. Binding to aripiprazol drug is regulated by cholesterol, which shapes the ligand-binding pocket, determining the specificity for aripiprazol. Activated by IHCH-7179 small molecule: IHCH-7179 acts both as an agonist activator for HTR1A and as an antagonist inhibitor for HTR2A. Activated by SEP-363856 small molecule: IHCH-7179 acts both as an agonist activator for HTR1A and TAAR1. In terms of biological role, G-protein coupled receptor for 5-hydroxytryptamine (serotonin). Also functions as a receptor for various drugs and psychoactive substances. Ligand binding causes a conformation change that triggers signaling via guanine nucleotide-binding proteins (G proteins) and modulates the activity of downstream effectors, such as adenylate cyclase. HTR1A is coupled to G(i)/G(o) G alpha proteins and mediates inhibitory neurotransmission: signaling inhibits adenylate cyclase activity and activates a phosphatidylinositol-calcium second messenger system that regulates the release of Ca(2+) ions from intracellular stores. Beta-arrestin family members regulate signaling by mediating both receptor desensitization and resensitization processes. Plays a role in the regulation of 5-hydroxytryptamine release and in the regulation of dopamine and 5-hydroxytryptamine metabolism. Plays a role in the regulation of dopamine and 5-hydroxytryptamine levels in the brain, and thereby affects neural activity, mood and behavior. Plays a role in the response to anxiogenic stimuli. This is 5-hydroxytryptamine receptor 1A from Homo sapiens (Human).